A 309-amino-acid chain; its full sequence is Uracil phosphoribosyltransferase homolog (309 aa).

Residues 1-38 form a disordered region; that stretch reads MATELQCPDSMPCHNQQVNSASTPSPEQLRPGDLILDH. The span at 13–26 shows a compositional bias: polar residues; sequence CHNQQVNSASTPSP. Ser-25 is modified (phosphoserine). GTP contacts are provided by residues Arg-133, Arg-142, and 176 to 179; that span reads EKGN. Position 186 (Arg-186) interacts with 5-phospho-alpha-D-ribose 1-diphosphate. 2 residues coordinate GTP: Arg-203 and Arg-232. 238-246 serves as a coordination point for 5-phospho-alpha-D-ribose 1-diphosphate; sequence YPILSTGNT. Position 299–301 (299–301) interacts with uracil; it reads THF.

The protein belongs to the UPRTase family. In terms of tissue distribution, highly expressed in leukocytes, liver, spleen and thymus, with lower expression in brain, lung and skeletal muscle.

It localises to the cytoplasm. The protein localises to the nucleus. In Homo sapiens (Human), this protein is Uracil phosphoribosyltransferase homolog (UPRT).